A 372-amino-acid chain; its full sequence is MTDALKRLSDEGVAIWLDDLSRKRITSGNLAELIDQQHVVGVTTNPSIFQKAISQGDGYDQQLADLAVRGVTVEEAIRMITTADVRDAADILRPVYDNTGGKDGRVSIEVDPRLAHNTHATVAEAKQLAWLVDRPNTFIKIPATEAGLPAIAETIGLGISVNVTLIFSLERYRKVMDAFLTGLEKAKERGLDLSQIHSVASFFVSRVDTEIDKRIDALGTDEAKAQRGKAAVANARLAYQAYEEVFGTDRWAALEKAGANKQRPLWASTGVKDKAYSDTMYVTDLVAPNTVNTMPEATLLATEDHGEITGDAVAGSYERARADLDAIEKLGISYDEVVQLLEKEGVDKFEDAWNDLLKSTEAELKRLAPSKG.

The active-site Schiff-base intermediate with substrate is K140.

This sequence belongs to the transaldolase family. Type 2 subfamily.

It localises to the cytoplasm. The enzyme catalyses D-sedoheptulose 7-phosphate + D-glyceraldehyde 3-phosphate = D-erythrose 4-phosphate + beta-D-fructose 6-phosphate. It functions in the pathway carbohydrate degradation; pentose phosphate pathway; D-glyceraldehyde 3-phosphate and beta-D-fructose 6-phosphate from D-ribose 5-phosphate and D-xylulose 5-phosphate (non-oxidative stage): step 2/3. Transaldolase is important for the balance of metabolites in the pentose-phosphate pathway. The polypeptide is Transaldolase 2 (Streptomyces coelicolor (strain ATCC BAA-471 / A3(2) / M145)).